Reading from the N-terminus, the 532-residue chain is Probable cytochrome c oxidase subunit 1 (532 aa).

Helical transmembrane passes span 33-53 (IMYI…SLLF), 74-94 (VLIT…ALFG), 95-115 (GFGN…FPRL), 118-138 (ISFW…FVDG), 163-183 (MAIF…INLI), 200-220 (PLFV…MPVL), 252-272 (LFWF…FGIV), and 284-304 (IFGY…GFIV). Histidine 79 serves as a coordination point for Fe(II)-heme a. Positions 258 and 262 each coordinate Cu cation. Cu cation-binding residues include histidine 307 and histidine 308. 2 consecutive transmembrane segments (helical) span residues 318–338 (ALIY…IKIF) and 355–375 (MLFS…GIIL). Heme a3 is bound at residue histidine 393. 3 helical membrane-spanning segments follow: residues 394 to 414 (FHYT…YYWF), 431 to 451 (FWIT…LGLA), and 473 to 493 (IGAG…FYTL). Position 395 (histidine 395) interacts with Fe(II)-heme a.

The protein belongs to the heme-copper respiratory oxidase family.

Its subcellular location is the cell membrane. The enzyme catalyses 4 Fe(II)-[cytochrome c] + O2 + 8 H(+)(in) = 4 Fe(III)-[cytochrome c] + 2 H2O + 4 H(+)(out). The protein operates within energy metabolism; oxidative phosphorylation. In terms of biological role, cytochrome c oxidase is the component of the respiratory chain that catalyzes the reduction of oxygen to water. Subunits 1-3 form the functional core of the enzyme complex. CO I is the catalytic subunit of the enzyme. Electrons originating in cytochrome c are transferred via the copper A center of subunit 2 and heme A of subunit 1 to the bimetallic center formed by heme A3 and copper B. In Rickettsia bellii (strain RML369-C), this protein is Probable cytochrome c oxidase subunit 1 (ctaD).